The primary structure comprises 356 residues: Protein RecA (356 aa).

69-76 contacts ATP; the sequence is GPESSGKT.

Belongs to the RecA family.

The protein localises to the cytoplasm. Can catalyze the hydrolysis of ATP in the presence of single-stranded DNA, the ATP-dependent uptake of single-stranded DNA by duplex DNA, and the ATP-dependent hybridization of homologous single-stranded DNAs. It interacts with LexA causing its activation and leading to its autocatalytic cleavage. This Gloeothece citriformis (strain PCC 7424) (Cyanothece sp. (strain PCC 7424)) protein is Protein RecA.